The chain runs to 349 residues: Adenine deaminase (349 aa).

Zn(2+) is bound by residues His-24, His-26, and His-204. The active-site Proton donor is Glu-207. Asp-285 provides a ligand contact to Zn(2+). Asp-286 contacts substrate.

This sequence belongs to the metallo-dependent hydrolases superfamily. Adenosine and AMP deaminases family. Adenine deaminase type 2 subfamily. Zn(2+) serves as cofactor.

The catalysed reaction is adenine + H2O + H(+) = hypoxanthine + NH4(+). Functionally, catalyzes the hydrolytic deamination of adenine to hypoxanthine. Plays an important role in the purine salvage pathway and in nitrogen catabolism. This is Adenine deaminase from Trichlorobacter lovleyi (strain ATCC BAA-1151 / DSM 17278 / SZ) (Geobacter lovleyi).